Reading from the N-terminus, the 65-residue chain is Large ribosomal subunit protein bL35 (65 aa).

A disordered region spans residues 1–52; that stretch reads MPKMKSNRAAAKRFKRTANGGFKSGNSFTSHRFHGKTKKQRRQLRGLSMMDK. Positions 31 to 44 are enriched in basic residues; that stretch reads HRFHGKTKKQRRQL.

Belongs to the bacterial ribosomal protein bL35 family.

This chain is Large ribosomal subunit protein bL35, found in Limosilactobacillus reuteri (strain DSM 20016) (Lactobacillus reuteri).